The chain runs to 351 residues: MKQVPEFHEDFYIPIPLDINNLSAYSPFLVPQDHLGNQGIFMAMSVFMFFIFIGGASINILTILCTIQFKKLRSHLNYILVNLSIANLFVAIFGSPLSFYSFFNRYFIFGATACKIEGFLATLGGMVGLWSLAVVAFERWLVICKPLGNFTFKTPHAIAGCILPWISALAASLPPLFGWSRYIPEGLQCSCGPDWYTTNNKYNNESYVMFLFCFCFAVPFGTIVFCYGQLLITLKLAAKAQADSASTQKAEREVTKMVVVMVLGFLVCWAPYASFSLWIVSHRGEEFDLRMATIPSCLSKASTVYNPVIYVLMNKQFRSCMMKMVCGKNIEEDEASTSSQVTQVSSVAPEK.

At Met1–Ile40 the chain is on the extracellular side. Asn21 is a glycosylation site (N-linked (GlcNAc...) asparagine). The helical transmembrane segment at Phe41–Cys65 threads the bilayer. Residues Thr66 to Asn77 lie on the Cytoplasmic side of the membrane. A helical transmembrane segment spans residues Tyr78 to Phe103. The Extracellular portion of the chain corresponds to Asn104 to Glu117. Cys114 and Cys191 are oxidised to a cystine. A helical transmembrane segment spans residues Gly118–Phe137. Residues Glu138–His156 are Cytoplasmic-facing. A helical membrane pass occupies residues Ala157–Ser180. The Extracellular portion of the chain corresponds to Arg181–Ser206. The chain crosses the membrane as a helical span at residues Tyr207–Leu234. The Cytoplasmic segment spans residues Lys235–Lys256. A helical transmembrane segment spans residues Met257 to Val280. Residues Ser281–Asp288 lie on the Extracellular side of the membrane. The chain crosses the membrane as a helical span at residues Leu289–Met313. Lys300 carries the N6-(retinylidene)lysine modification. The Cytoplasmic segment spans residues Asn314 to Lys351.

This sequence belongs to the G-protein coupled receptor 1 family. Opsin subfamily. Post-translationally, phosphorylated on some or all of the serine and threonine residues present in the C-terminal region. The color pigments are found in the cone photoreceptor cells.

The protein resides in the membrane. In terms of biological role, visual pigments are the light-absorbing molecules that mediate vision. They consist of an apoprotein, opsin, covalently linked to cis-retinal. The polypeptide is Blue-sensitive opsin (Carassius auratus (Goldfish)).